Consider the following 358-residue polypeptide: Probable aminomethyltransferase (358 aa).

Belongs to the GcvT family. The glycine cleavage system is composed of four proteins: P, T, L and H.

It catalyses the reaction N(6)-[(R)-S(8)-aminomethyldihydrolipoyl]-L-lysyl-[protein] + (6S)-5,6,7,8-tetrahydrofolate = N(6)-[(R)-dihydrolipoyl]-L-lysyl-[protein] + (6R)-5,10-methylene-5,6,7,8-tetrahydrofolate + NH4(+). Functionally, the glycine cleavage system catalyzes the degradation of glycine. The protein is Probable aminomethyltransferase of Natronomonas pharaonis (strain ATCC 35678 / DSM 2160 / CIP 103997 / JCM 8858 / NBRC 14720 / NCIMB 2260 / Gabara) (Halobacterium pharaonis).